The following is a 273-amino-acid chain: Mitochondrial distribution and morphology protein 12 (273 aa).

The 260-residue stretch at 1 to 260 (MSFDINWEQL…WPSWINFDFY (260 aa)) folds into the SMP-LTD domain. A disordered region spans residues 76-98 (MSAEEETEGSDDEGYGGDRVRNR). The segment covering 78-90 (AEEETEGSDDEGY) has biased composition (acidic residues).

Belongs to the MDM12 family. Component of the ER-mitochondria encounter structure (ERMES) or MDM complex, composed of MMM1, MDM10, MDM12 and MDM34. An MMM1 homodimer associates with one molecule of MDM12 on each side in a pairwise head-to-tail manner, and the SMP-LTD domains of MMM1 and MDM12 generate a continuous hydrophobic tunnel for phospholipid trafficking.

It localises to the mitochondrion outer membrane. The protein localises to the endoplasmic reticulum membrane. Its function is as follows. Component of the ERMES/MDM complex, which serves as a molecular tether to connect the endoplasmic reticulum (ER) and mitochondria. Components of this complex are involved in the control of mitochondrial shape and protein biogenesis, and function in nonvesicular lipid trafficking between the ER and mitochondria. MDM12 is required for the interaction of the ER-resident membrane protein MMM1 and the outer mitochondrial membrane-resident beta-barrel protein MDM10. The MDM12-MMM1 subcomplex functions in the major beta-barrel assembly pathway that is responsible for biogenesis of all mitochondrial outer membrane beta-barrel proteins, and acts in a late step after the SAM complex. The MDM10-MDM12-MMM1 subcomplex further acts in the TOM40-specific pathway after the action of the MDM12-MMM1 complex. Essential for establishing and maintaining the structure of mitochondria and maintenance of mtDNA nucleoids. This chain is Mitochondrial distribution and morphology protein 12, found in Vanderwaltozyma polyspora (strain ATCC 22028 / DSM 70294 / BCRC 21397 / CBS 2163 / NBRC 10782 / NRRL Y-8283 / UCD 57-17) (Kluyveromyces polysporus).